The chain runs to 335 residues: Biotin synthase (335 aa).

Positions 39-267 (TKIQVCKLIS…ASDVRLSAGR (229 aa)) constitute a Radical SAM core domain. Positions 54, 58, and 61 each coordinate [4Fe-4S] cluster. Residues Cys-98, Cys-130, Cys-190, and Arg-262 each coordinate [2Fe-2S] cluster.

The protein belongs to the radical SAM superfamily. Biotin synthase family. As to quaternary structure, homodimer. It depends on [4Fe-4S] cluster as a cofactor. [2Fe-2S] cluster serves as cofactor.

It catalyses the reaction (4R,5S)-dethiobiotin + (sulfur carrier)-SH + 2 reduced [2Fe-2S]-[ferredoxin] + 2 S-adenosyl-L-methionine = (sulfur carrier)-H + biotin + 2 5'-deoxyadenosine + 2 L-methionine + 2 oxidized [2Fe-2S]-[ferredoxin]. It participates in cofactor biosynthesis; biotin biosynthesis; biotin from 7,8-diaminononanoate: step 2/2. In terms of biological role, catalyzes the conversion of dethiobiotin (DTB) to biotin by the insertion of a sulfur atom into dethiobiotin via a radical-based mechanism. The sequence is that of Biotin synthase from Nostoc punctiforme (strain ATCC 29133 / PCC 73102).